A 319-amino-acid chain; its full sequence is Ribosomal large subunit pseudouridine synthase C (319 aa).

An S4 RNA-binding domain is found at 20-83 (QRIDNFLRTQ…AEREEEAVSP (64 aa)). Aspartate 144 is an active-site residue.

Belongs to the pseudouridine synthase RluA family.

It catalyses the reaction uridine(955/2504/2580) in 23S rRNA = pseudouridine(955/2504/2580) in 23S rRNA. In terms of biological role, responsible for synthesis of pseudouridine from uracil at positions 955, 2504 and 2580 in 23S ribosomal RNA. The chain is Ribosomal large subunit pseudouridine synthase C from Escherichia coli (strain K12).